The following is a 310-amino-acid chain: Probable manganese-dependent inorganic pyrophosphatase (310 aa).

Mn(2+)-binding residues include H9, D13, D15, D75, H97, and D149.

This sequence belongs to the PPase class C family. It depends on Mn(2+) as a cofactor.

Its subcellular location is the cytoplasm. It carries out the reaction diphosphate + H2O = 2 phosphate + H(+). The sequence is that of Probable manganese-dependent inorganic pyrophosphatase from Bacillus cytotoxicus (strain DSM 22905 / CIP 110041 / 391-98 / NVH 391-98).